The primary structure comprises 104 residues: Phosphoribosyl-ATP pyrophosphatase (104 aa).

It belongs to the PRA-PH family.

Its subcellular location is the cytoplasm. The catalysed reaction is 1-(5-phospho-beta-D-ribosyl)-ATP + H2O = 1-(5-phospho-beta-D-ribosyl)-5'-AMP + diphosphate + H(+). It functions in the pathway amino-acid biosynthesis; L-histidine biosynthesis; L-histidine from 5-phospho-alpha-D-ribose 1-diphosphate: step 2/9. The chain is Phosphoribosyl-ATP pyrophosphatase from Methanocorpusculum labreanum (strain ATCC 43576 / DSM 4855 / Z).